The chain runs to 78 residues: TP53-regulated inhibitor of apoptosis 1-A (78 aa).

Residues 1 to 52 adopt a coiled-coil conformation; it reads MNSVGEECTDMKRDYDQCFNRWFAEKFLKGAGSGDPCTELFRRYRECVQKAI. Positions 5 to 55 constitute a CHCH domain; sequence GEECTDMKRDYDQCFNRWFAEKFLKGAGSGDPCTELFRRYRECVQKAIKDK. 2 consecutive short sequence motifs (cx9C motif) follow at residues 8 to 18 and 37 to 47; these read CTDMKRDYDQC and CTELFRRYREC. 2 disulfides stabilise this stretch: Cys-8-Cys-47 and Cys-18-Cys-37.

This sequence belongs to the TRIAP1/MDM35 family. As to quaternary structure, monomer. Forms a complex with prelid1 in the mitochondrion intermembrane space. Interacts with prelid3a.

The protein resides in the mitochondrion. It is found in the mitochondrion intermembrane space. It catalyses the reaction a 1,2-diacyl-sn-glycero-3-phosphate(in) = a 1,2-diacyl-sn-glycero-3-phosphate(out). Its function is as follows. Involved in the modulation of the mitochondrial apoptotic pathway by ensuring the accumulation of cardiolipin (CL) in mitochondrial membranes. The triap1:prelid1 complex probably functions as a phosphatidic acid (PA) transporter across the mitochondrion intermembrane space to provide PA for cardiolipin CL synthesis in the inner membrane. Likewise, the triap1:prelid3a complex mediates the transfer of phosphatidic acid (PA) between liposomes (in vitro) and probably functions as a PA transporter across the mitochondrion intermembrane space (in vivo). Mediates cell survival by inhibiting activation of caspase-9 which prevents induction of apoptosis. Required for pronephros development; probably involved at an early stage in the formation of pronephric components derived from the somatic layer. In Xenopus laevis (African clawed frog), this protein is TP53-regulated inhibitor of apoptosis 1-A (triap1-a).